Consider the following 297-residue polypeptide: Guanylate kinase (297 aa).

The Guanylate kinase-like domain occupies 4–183 (GKMIIISGPS…AVAKITDVLH (180 aa)). Residue 11–18 (GPSGVGKG) coordinates ATP. The unknown stretch occupies residues 204 to 297 (EQIVKEKYMY…EQKHYNNDEF (94 aa)).

Belongs to the guanylate kinase family.

The protein localises to the cytoplasm. It carries out the reaction GMP + ATP = GDP + ADP. Essential for recycling GMP and indirectly, cGMP. The sequence is that of Guanylate kinase (gmk) from Mycoplasma capricolum subsp. capricolum (strain California kid / ATCC 27343 / NCTC 10154).